The chain runs to 350 residues: Methionine import ATP-binding protein MetN (350 aa).

The ABC transporter domain occupies 2 to 241; it reads IQIKNLKKEY…PQAPVTRSFV (240 aa). 38 to 45 contacts ATP; it reads GHSGAGKS.

It belongs to the ABC transporter superfamily. Methionine importer (TC 3.A.1.24) family. As to quaternary structure, the complex is composed of two ATP-binding proteins (MetN), two transmembrane proteins (MetI) and a solute-binding protein (MetQ).

The protein resides in the cell inner membrane. It carries out the reaction L-methionine(out) + ATP + H2O = L-methionine(in) + ADP + phosphate + H(+). The enzyme catalyses D-methionine(out) + ATP + H2O = D-methionine(in) + ADP + phosphate + H(+). Part of the ABC transporter complex MetNIQ involved in methionine import. Responsible for energy coupling to the transport system. This chain is Methionine import ATP-binding protein MetN, found in Francisella tularensis subsp. holarctica (strain LVS).